We begin with the raw amino-acid sequence, 342 residues long: tRNA N6-adenosine threonylcarbamoyltransferase (342 aa).

Histidine 112 and histidine 116 together coordinate Fe cation. Substrate-binding positions include 134-138 (LASGG), aspartate 167, glycine 180, and asparagine 280. A Fe cation-binding site is contributed by aspartate 308.

This sequence belongs to the KAE1 / TsaD family. Fe(2+) is required as a cofactor.

It localises to the cytoplasm. It carries out the reaction L-threonylcarbamoyladenylate + adenosine(37) in tRNA = N(6)-L-threonylcarbamoyladenosine(37) in tRNA + AMP + H(+). Required for the formation of a threonylcarbamoyl group on adenosine at position 37 (t(6)A37) in tRNAs that read codons beginning with adenine. Is involved in the transfer of the threonylcarbamoyl moiety of threonylcarbamoyl-AMP (TC-AMP) to the N6 group of A37, together with TsaE and TsaB. TsaD likely plays a direct catalytic role in this reaction. This is tRNA N6-adenosine threonylcarbamoyltransferase from Rickettsia canadensis (strain McKiel).